The sequence spans 596 residues: Proton channel OTOP3 (596 aa).

A compositionally biased stretch (low complexity) spans 1 to 21 (MGRGARAAAAQSRWGRASRAS). Residues 1 to 59 (MGRGARAAAAQSRWGRASRASVSPGRTIRSAPAVGEAQETEAAPEKENRVDVGAEERAA) are disordered. The Cytoplasmic segment spans residues 1 to 88 (MGRGARAAAA…RDRQAQKAGQ (88 aa)). Phosphoserine is present on residues Ser-21 and Ser-23. The span at 43 to 59 (APEKENRVDVGAEERAA) shows a compositional bias: basic and acidic residues. Residues 89-109 (LFSGLLALNVVFLGGAFICSM) form a helical membrane-spanning segment. The Extracellular portion of the chain corresponds to 110-119 (IFNKVAVTLG). The helical transmembrane segment at 120–143 (DVWILLATLKVLSLLWLLYYVAST) threads the bilayer. Over 144 to 159 (TRRPHAVLYQDPHAGP) the chain is Cytoplasmic. Residues 160 to 181 (LWVRGSLVLFGSCTFCLNIFRV) form a helical membrane-spanning segment. At 182 to 193 (GYDVSHIRCKSQ) the chain is on the extracellular side. Residues 194-217 (LDLVFSVIEMVFIGVQTWVLWKHC) traverse the membrane as a helical segment. Residues 218 to 225 (KDCVRVQT) are Cytoplasmic-facing. The chain crosses the membrane as a helical span at residues 226–248 (NFTRCGLMLTLATNLLLWVLAVT). Over 249-295 (NDSMHREIEAELGILMEKSTGNETNTCLCLNATACEAFRRGFLMLYP) the chain is Extracellular. The chain crosses the membrane as a helical span at residues 296–312 (FSTEYCLICCAVLFVMW). The Cytoplasmic portion of the chain corresponds to 313-338 (KNVGRHVAPHMGAHPATAPFHLHGAI). Residues 339 to 358 (FGPLLGLLVLLAGVCVFVLF) form a helical membrane-spanning segment. At 359–372 (QIEASGPAIACQYF) the chain is on the extracellular side. A helical membrane pass occupies residues 373–395 (TLYYAFYVAVLPTMSLACLAGTA). At 396 to 413 (IHGLEERELDTVKNPTRS) the chain is on the cytoplasmic side. Residues 414–435 (LDVVLLMGAALGQMGIAYFSIV) form a helical membrane-spanning segment. Topologically, residues 436 to 446 (AIVAKRPHELL) are extracellular. A helical membrane pass occupies residues 447–469 (NRLILAYSLLLILQHIAQNLFII). The Cytoplasmic portion of the chain corresponds to 470-529 (EGLHRRPLWETVPEGLAGKQEAEPPRRGSLLELGQGLQRASLAYIHSYSHLNWKRRALKE). A helical transmembrane segment spans residues 530-547 (ISLFLILCNITLWMMPAF). The Extracellular segment spans residues 548 to 566 (GIHPEFENGLEKDFYGYQI). Residues 567 to 589 (WFAIVNFGLPLGVFYRMHSVGGL) traverse the membrane as a helical segment. Over 590-596 (VEVYLGA) the chain is Cytoplasmic.

Belongs to the otopetrin family. In terms of assembly, homodimer.

It localises to the cell membrane. The enzyme catalyses H(+)(in) = H(+)(out). Its activity is regulated as follows. Activated by extracellular acidification. Activated by Zn(2+) under non-acidic conditions. Its function is as follows. Proton-selective channel gated by extracellular protons. This chain is Proton channel OTOP3, found in Homo sapiens (Human).